Here is a 155-residue protein sequence, read N- to C-terminus: Protein-export protein SecB (155 aa).

The protein belongs to the SecB family. Homotetramer, a dimer of dimers. One homotetramer interacts with 1 SecA dimer.

It is found in the cytoplasm. Functionally, one of the proteins required for the normal export of preproteins out of the cell cytoplasm. It is a molecular chaperone that binds to a subset of precursor proteins, maintaining them in a translocation-competent state. It also specifically binds to its receptor SecA. The protein is Protein-export protein SecB of Escherichia coli O139:H28 (strain E24377A / ETEC).